Reading from the N-terminus, the 430-residue chain is Enolase (430 aa).

(2R)-2-phosphoglycerate is bound at residue glutamine 163. Glutamate 205 serves as the catalytic Proton donor. Positions 242, 287, and 314 each coordinate Mg(2+). (2R)-2-phosphoglycerate contacts are provided by lysine 339, arginine 368, serine 369, and lysine 390. The active-site Proton acceptor is the lysine 339.

It belongs to the enolase family. Mg(2+) is required as a cofactor.

The protein resides in the cytoplasm. It localises to the secreted. The protein localises to the cell surface. The enzyme catalyses (2R)-2-phosphoglycerate = phosphoenolpyruvate + H2O. The protein operates within carbohydrate degradation; glycolysis; pyruvate from D-glyceraldehyde 3-phosphate: step 4/5. In terms of biological role, catalyzes the reversible conversion of 2-phosphoglycerate (2-PG) into phosphoenolpyruvate (PEP). It is essential for the degradation of carbohydrates via glycolysis. This Listeria innocua serovar 6a (strain ATCC BAA-680 / CLIP 11262) protein is Enolase.